The sequence spans 372 residues: Cell division protein FtsZ 1 (372 aa).

GTP contacts are provided by residues 51 to 55 (GAGCN), 138 to 140 (GTG), E169, R173, and D216. Positions 351–372 (QEETPEPSEEEVPPVKIDIPEL) are disordered. The segment covering 353–362 (ETPEPSEEEV) has biased composition (acidic residues).

It belongs to the FtsZ family. As to quaternary structure, homodimer. Polymerizes to form a dynamic ring structure in a strictly GTP-dependent manner. Interacts directly with several other division proteins.

The protein resides in the cytoplasm. Essential cell division protein that forms a contractile ring structure (Z ring) at the future cell division site. The regulation of the ring assembly controls the timing and the location of cell division. One of the functions of the FtsZ ring is to recruit other cell division proteins to the septum to produce a new cell wall between the dividing cells. Binds GTP and shows GTPase activity. This is Cell division protein FtsZ 1 from Pyrococcus abyssi (strain GE5 / Orsay).